The following is a 750-amino-acid chain: K(+)-insensitive pyrophosphate-energized proton pump (750 aa).

Transmembrane regions (helical) follow at residues 1–21 (MYGLVVCLFGMIFGLIQYQGI), 51–71 (FIIILWALVAAIIVAYFGGLN), 78–98 (VVFILACSLLGIAGSYTVAWF), 133–153 (IGMLLISIELFAMLCILLFIP), and 161–181 (FIGFAIGESLGASVLRIAGGI). Residue Lys-184 coordinates substrate. Mg(2+)-binding residues include Asp-187, Asp-191, and Asp-216. Helical transmembrane passes span 227 to 247 (DGFETYGVTGVALISFILLAI), 257 to 277 (LVWIFAMRLVMIVASAVSYWV), 301 to 321 (LVWLTSIVSIVLTYIASYMLI), 327 to 347 (GTMWWKLASIITCGTIAGALI), 391 to 411 (WMGLAIIVLMGAAFGFSTLGL), and 420 to 440 (VFAFGLVAFGFLSMGPVTIAV). Residue Asp-448 coordinates Mg(2+). Helical transmembrane passes span 503 to 523 (VLIGTAVVGSTTMIFSIIMIL), 538 to 558 (ILWPPFLLGLLMGGAVIYWFT), 607 to 627 (GMINLFLTIFFSTLAFACLES), and 629 to 649 (LFIGYLISIALFGLYQAIFMA). 3 residues coordinate Ca(2+): Asp-656, Asp-681, and Asp-685. Lys-688 contributes to the substrate binding site. Transmembrane regions (helical) follow at residues 694–714 (ALNPIIKFTTLFGLLAIELAI) and 716–736 (LPTTISVSLAVVFFLLSLVFV).

The protein belongs to the H(+)-translocating pyrophosphatase (TC 3.A.10) family. K(+)-insensitive subfamily. As to quaternary structure, homodimer. The cofactor is Mg(2+).

The protein resides in the cell inner membrane. It catalyses the reaction diphosphate + H2O + H(+)(in) = 2 phosphate + 2 H(+)(out). In terms of biological role, proton pump that utilizes the energy of pyrophosphate hydrolysis as the driving force for proton movement across the membrane. Generates a proton motive force. This Chlorobaculum tepidum (strain ATCC 49652 / DSM 12025 / NBRC 103806 / TLS) (Chlorobium tepidum) protein is K(+)-insensitive pyrophosphate-energized proton pump.